The primary structure comprises 180 residues: Endoribonuclease YbeY (180 aa).

Zn(2+)-binding residues include His149, His153, and His159.

The protein belongs to the endoribonuclease YbeY family. It depends on Zn(2+) as a cofactor.

The protein localises to the cytoplasm. Single strand-specific metallo-endoribonuclease involved in late-stage 70S ribosome quality control and in maturation of the 3' terminus of the 16S rRNA. In Prochlorococcus marinus (strain MIT 9515), this protein is Endoribonuclease YbeY.